A 1584-amino-acid polypeptide reads, in one-letter code: Cilia- and flagella-associated protein 74 (1584 aa).

Positions R300–Q379 form a coiled coil. A compositionally biased stretch (polar residues) spans S692–M706. A disordered region spans residues S692–E739. Basic and acidic residues predominate over residues Q707 to K717.

Belongs to the CFAP74 family.

The protein localises to the cytoplasm. Its subcellular location is the cytoskeleton. The protein resides in the cilium axoneme. It localises to the flagellum axoneme. Functionally, as part of the central apparatus of the cilium axoneme may play a role in cilium movement. May play an important role in sperm architecture and function. This is Cilia- and flagella-associated protein 74 from Homo sapiens (Human).